Consider the following 274-residue polypeptide: Diaminopimelate epimerase (274 aa).

Substrate is bound by residues asparagine 11, glutamine 44, and asparagine 64. Residue cysteine 73 is the Proton donor of the active site. Substrate is bound by residues 74–75 (GN), asparagine 157, asparagine 190, and 208–209 (ER). Cysteine 217 serves as the catalytic Proton acceptor. Position 218-219 (218-219 (GS)) interacts with substrate.

It belongs to the diaminopimelate epimerase family. In terms of assembly, homodimer.

Its subcellular location is the cytoplasm. It catalyses the reaction (2S,6S)-2,6-diaminopimelate = meso-2,6-diaminopimelate. It functions in the pathway amino-acid biosynthesis; L-lysine biosynthesis via DAP pathway; DL-2,6-diaminopimelate from LL-2,6-diaminopimelate: step 1/1. Functionally, catalyzes the stereoinversion of LL-2,6-diaminopimelate (L,L-DAP) to meso-diaminopimelate (meso-DAP), a precursor of L-lysine and an essential component of the bacterial peptidoglycan. The polypeptide is Diaminopimelate epimerase (Pasteurella multocida (strain Pm70)).